Here is a 294-residue protein sequence, read N- to C-terminus: Protoheme IX farnesyltransferase (294 aa).

Transmembrane regions (helical) follow at residues 24 to 44 (VVLL…PGWV), 48 to 68 (LIAF…AINH), 96 to 116 (ALWF…LFVN), 118 to 138 (LTAL…TGYL), 146 to 166 (IVIG…AVTG), 172 to 192 (ALLL…ALAI), 224 to 244 (VLLL…WIYL), 245 to 265 (LGAL…YFTD), and 268 to 288 (VVAM…FVFL).

It belongs to the UbiA prenyltransferase family. Protoheme IX farnesyltransferase subfamily.

It is found in the cell inner membrane. The catalysed reaction is heme b + (2E,6E)-farnesyl diphosphate + H2O = Fe(II)-heme o + diphosphate. It functions in the pathway porphyrin-containing compound metabolism; heme O biosynthesis; heme O from protoheme: step 1/1. In terms of biological role, converts heme B (protoheme IX) to heme O by substitution of the vinyl group on carbon 2 of heme B porphyrin ring with a hydroxyethyl farnesyl side group. The sequence is that of Protoheme IX farnesyltransferase from Legionella pneumophila (strain Paris).